A 148-amino-acid chain; its full sequence is Phospholipase A2-alpha (148 aa).

An N-terminal signal peptide occupies residues 1–20 (MAAPIILFSFLLFFSVSVSA). Cystine bridges form between cysteine 38/cysteine 66, cysteine 42/cysteine 72, cysteine 47/cysteine 122, cysteine 59/cysteine 79, cysteine 78/cysteine 105, and cysteine 85/cysteine 98. Residues tyrosine 58, glycine 60, and tyrosine 63 each contribute to the Ca(2+) site. The active site involves histidine 82. Aspartate 83 is a binding site for Ca(2+).

This sequence belongs to the phospholipase A2 family. In terms of assembly, interacts with MYB30. Requires Ca(2+) as cofactor. In terms of tissue distribution, ubiquitous but expressed at a low level.

The protein localises to the secreted. Its subcellular location is the golgi apparatus. The protein resides in the cytoplasmic vesicle. It is found in the nucleus. The catalysed reaction is a 1,2-diacyl-sn-glycero-3-phosphocholine + H2O = a 1-acyl-sn-glycero-3-phosphocholine + a fatty acid + H(+). In terms of biological role, PA2 catalyzes the calcium-dependent hydrolysis of the 2-acyl groups in 3-sn-phosphoglycerides. Releases lysophospholipids (LPLs) and free fatty acids (FFAs) from membrane phospholipids in response to hormones and other external stimuli. Modulates the trafficking of PIN proteins to the plasma membrane. Negatively regulates MYB30 transcriptional activity and hypersensitive response control. This is Phospholipase A2-alpha from Arabidopsis thaliana (Mouse-ear cress).